Consider the following 175-residue polypeptide: Small ribosomal subunit protein mS38 (175 aa).

This sequence belongs to the mitochondrion-specific ribosomal protein mS38 family. Component of the mitochondrial small ribosomal subunit (mt-SSU). Mature yeast 74S mitochondrial ribosomes consist of a small (37S) and a large (54S) subunit. The 37S small subunit contains a 15S ribosomal RNA (15S mt-rRNA) and at least 32 different proteins. The 54S large subunit contains a 21S rRNA (21S mt-rRNA) and at least 45 different proteins.

The protein localises to the mitochondrion. Its subcellular location is the mitochondrion inner membrane. In terms of biological role, component of the mitochondrial ribosome (mitoribosome), a dedicated translation machinery responsible for the synthesis of mitochondrial genome-encoded proteins, including at least some of the essential transmembrane subunits of the mitochondrial respiratory chain. The mitoribosomes are attached to the mitochondrial inner membrane and translation products are cotranslationally integrated into the membrane. mS38 is also involved in the splicing of the COX1 mRNA. The chain is Small ribosomal subunit protein mS38 (cox24) from Schizosaccharomyces pombe (strain 972 / ATCC 24843) (Fission yeast).